Here is a 354-residue protein sequence, read N- to C-terminus: Diaminopimelate epimerase, chloroplastic (354 aa).

Residues 1–44 (MSSATAAATATIAAAAAKLAATPAPAPSRRRLTLRGNPTARRCV) constitute a chloroplast transit peptide. Active-site residues include C142 and C297.

This sequence belongs to the diaminopimelate epimerase family.

Its subcellular location is the plastid. It is found in the chloroplast. The catalysed reaction is (2S,6S)-2,6-diaminopimelate = meso-2,6-diaminopimelate. Its pathway is amino-acid biosynthesis; L-lysine biosynthesis via DAP pathway; DL-2,6-diaminopimelate from LL-2,6-diaminopimelate: step 1/1. In Oryza sativa subsp. japonica (Rice), this protein is Diaminopimelate epimerase, chloroplastic (DAPF).